We begin with the raw amino-acid sequence, 854 residues long: MPRNVPEVNGVYRHGACELWCRAMAHALLKRSGVRRGLGGREGPLKRLRLAVEDFVRTTSESEACESRSAVARSRPGGRKSRKELRKEKRHLRKARRLQRTVGSGSGDQGGNVGLNDGPETRRPPTEVRPTPAKATATPAKASAPSTNTKASAAQPKAKAKGAPGKPGPATATARKRALLAANEEEDREIRKLERCLGLHKRKKKGDGSSVPLSFARDGLDYILGALECGSGGGLYESSEEEEEEKLETGQTVLESDLESNSKESEEDPDWQVLQEDQEDVNSKRRGEAESGTRGNKGTKKVRFAEVVEKSRSSSEDDIEQQESHSVESGEKYIPPRLRNEEVIDVHKKEELDRLKKHVKGLINRLSEPNMASISGQLEELYMAHSRKDMNDTLTTALMDACVTASAMPSRLMMEHVFLVSILHHTVGIEVGACFLEAVVKKFDAIYRDGGEGKELDNLFTMIAHLYNFHVVQSILIFDILKKLVGTFTEKDIELILLMLKNVGFALRKDDALSLKELITEAQTQASGAGNKFQDQNRVRFMLETMLALKNNDLRKIPGYNPEPVEKLKKLQRTLVRNAGSGSETRLRISWDGILNAEQTGRWWIVGSAWSGTPMIDNSHHIQLQKPLAGMASSKMLELARKQRMNTDVRRIIFCTLMTSEDFLDAFEKLLKLGLKDQQEREIVHILMDCCLQEKTYNPFYAFLASKFCDYERRFQMTFQFSIWDKFRDLENLPDTKFSNLVHLLAHLLRTKSLPLSVLKVVEFSELDKPRVHFLRRVLTALLMETEDDDLAVIFSRVSDNPKLGMLREGLKLFIGHFLLKHTQAHQSAEEASLLREKAGLASKSLQGKAILRM.

Residues Pro-2–Gln-275 form a necessary for nucleolar localization and for targeting PPP1CA to the nucleolus region. Ser-60 is modified (phosphoserine). Disordered regions lie at residues Glu-66 to Phe-215 and Ser-231 to Tyr-333. A compositionally biased stretch (basic residues) spans Pro-76–Gln-99. Over residues Ser-104–Val-113 the composition is skewed to gly residues. Residues Val-128–Thr-173 are compositionally biased toward low complexity. Basic and acidic residues predominate over residues Arg-188–Leu-197. The span at Ser-265 to Asp-280 shows a compositional bias: acidic residues. Composition is skewed to basic and acidic residues over residues Val-281–Ser-291, Arg-303–Ser-315, and Gln-322–Glu-331. The short motif at Lys-301–Phe-304 is the Required for efficient binding to PPP1CA and for targeting PPP1CA to the nucleolus element. A phosphoserine mark is found at Ser-311, Ser-314, and Ser-315. Residues Lys-356–Asp-553 form the MIF4G domain. In terms of domain architecture, MI spans Asp-648–Phe-764.

Belongs to the CWC22 family. As to quaternary structure, may interact with EIF4A1, EIF4A2 and EIF4A3. Interacts with PPP1CA and PPP1CC.

It is found in the nucleus. The protein resides in the nucleolus. Functionally, plays a role in targeting PPP1CA to the nucleolus. The sequence is that of Nucleolar MIF4G domain-containing protein 1 (Nom1) from Mus musculus (Mouse).